A 379-amino-acid chain; its full sequence is Cytochrome b (379 aa).

4 helical membrane passes run 32–52, 76–97, 112–132, and 177–197; these read FGSL…FLAM, WLIR…YMHI, WNVG…GYVL, and FFAF…IHLL. Positions 82 and 96 each coordinate heme b. The heme b site is built by His-181 and His-195. Residue His-200 coordinates a ubiquinone. The next 4 helical transmembrane spans lie at 225–245, 287–307, 319–339, and 346–366; these read YKDL…ALFS, LGGV…PFLH, LTQI…WIGG, and FIII…VLSP.

This sequence belongs to the cytochrome b family. As to quaternary structure, the cytochrome bc1 complex contains 3 respiratory subunits (MT-CYB, CYC1 and UQCRFS1), 2 core proteins (UQCRC1 and UQCRC2) and probably 6 low-molecular weight proteins. The cofactor is heme b.

It localises to the mitochondrion inner membrane. Component of the ubiquinol-cytochrome c reductase complex (complex III or cytochrome b-c1 complex) that is part of the mitochondrial respiratory chain. The b-c1 complex mediates electron transfer from ubiquinol to cytochrome c. Contributes to the generation of a proton gradient across the mitochondrial membrane that is then used for ATP synthesis. In Chlorophthalmus agassizi (Shortnose greeneye), this protein is Cytochrome b (mt-cyb).